A 37-amino-acid chain; its full sequence is MEPNPNRQPVELNRTSLYLGLLLILVLALLFSSYFFN.

The Cytoplasmic segment spans residues 1-13; that stretch reads MEPNPNRQPVELN. Residues 14–35 traverse the membrane as a helical segment; the sequence is RTSLYLGLLLILVLALLFSSYF. At 36-37 the chain is on the lumenal side; sequence FN.

In terms of assembly, PSII is composed of 1 copy each of membrane proteins PsbA, PsbB, PsbC, PsbD, PsbE, PsbF, PsbH, PsbI, PsbJ, PsbK, PsbL, PsbM, PsbT, PsbX, PsbY, PsbZ, Psb30/Ycf12, peripheral proteins PsbO, CyanoQ (PsbQ), PsbU, PsbV and a large number of cofactors. It forms dimeric complexes. Part of a photosystem II (PSII) assembly intermediate complex PSII-I; crystallized from a strain deleted of psbJ, it forms monomeric PSII before addition of the oxygen evolving complex. PSII-I includes 3 assembly factors not found in mature PSII (Psb27, Psb28 and Psb34). The cofactor is PSII binds multiple chlorophylls, carotenoids and specific lipids..

It is found in the cellular thylakoid membrane. Functionally, one of the components of the core complex of photosystem II (PSII). PSII is a light-driven water:plastoquinone oxidoreductase that uses light energy to abstract electrons from H(2)O, generating O(2) and a proton gradient subsequently used for ATP formation. It consists of a core antenna complex that captures photons, and an electron transfer chain that converts photonic excitation into a charge separation. This subunit is found at the monomer-monomer interface and is required for correct PSII assembly and/or dimerization. This subunit may make specific contacts with lipid(s). This is Photosystem II reaction center protein L from Thermosynechococcus vestitus (strain NIES-2133 / IAM M-273 / BP-1).